A 222-amino-acid polypeptide reads, in one-letter code: Ras-related protein RabT1 (222 aa).

Residue 37–44 (GDNKTGKS) coordinates GTP. The short motif at 59–66 (VSSIGVDF) is the Effector region element. GTP contacts are provided by residues 85–89 (DVNSC) and 145–148 (NKCD). Position 219 is a cysteine methyl ester (C219). C219 is lipidated: S-geranylgeranyl cysteine. The propeptide at 220–222 (NIL) is removed in mature form.

Belongs to the small GTPase superfamily. Rab family.

The protein localises to the cell membrane. In Dictyostelium discoideum (Social amoeba), this protein is Ras-related protein RabT1 (rabT1).